Here is a 249-residue protein sequence, read N- to C-terminus: NAD(P)H-quinone oxidoreductase subunit K (249 aa).

[4Fe-4S] cluster-binding residues include C65, C66, C130, and C161.

The protein belongs to the complex I 20 kDa subunit family. As to quaternary structure, NDH-1 can be composed of about 15 different subunits; different subcomplexes with different compositions have been identified which probably have different functions. Requires [4Fe-4S] cluster as cofactor.

It is found in the cellular thylakoid membrane. It catalyses the reaction a plastoquinone + NADH + (n+1) H(+)(in) = a plastoquinol + NAD(+) + n H(+)(out). It carries out the reaction a plastoquinone + NADPH + (n+1) H(+)(in) = a plastoquinol + NADP(+) + n H(+)(out). In terms of biological role, NDH-1 shuttles electrons from an unknown electron donor, via FMN and iron-sulfur (Fe-S) centers, to quinones in the respiratory and/or the photosynthetic chain. The immediate electron acceptor for the enzyme in this species is believed to be plastoquinone. Couples the redox reaction to proton translocation, and thus conserves the redox energy in a proton gradient. Cyanobacterial NDH-1 also plays a role in inorganic carbon-concentration. The sequence is that of NAD(P)H-quinone oxidoreductase subunit K from Prochlorococcus marinus (strain NATL2A).